A 348-amino-acid chain; its full sequence is NADH-cytochrome b5 reductase 2 (348 aa).

A helical transmembrane segment spans residues Thr41–Gly61. The 106-residue stretch at Gln97–Thr202 folds into the FAD-binding FR-type domain. Lys205 to Leu240 contributes to the FAD binding site.

Belongs to the flavoprotein pyridine nucleotide cytochrome reductase family. FAD serves as cofactor.

The protein resides in the mitochondrion outer membrane. The catalysed reaction is 2 Fe(III)-[cytochrome b5] + NADH = 2 Fe(II)-[cytochrome b5] + NAD(+) + H(+). Its function is as follows. May mediate the reduction of outer membrane cytochrome b5. This chain is NADH-cytochrome b5 reductase 2 (MCR1), found in Chaetomium globosum (strain ATCC 6205 / CBS 148.51 / DSM 1962 / NBRC 6347 / NRRL 1970) (Soil fungus).